We begin with the raw amino-acid sequence, 2339 residues long: Voltage-dependent N-type calcium channel subunit alpha-1B (2339 aa).

Residues 1–90 (MVRFGDELGG…DNVVRKYAKR (90 aa)) lie on the Cytoplasmic side of the membrane. A compositionally biased stretch (gly residues) spans 15–34 (AGGAERARGGGAGGAGGPGP). The interval 15 to 37 (AGGAERARGGGAGGAGGPGPGGL) is disordered. R22 is subject to Omega-N-methylarginine. An I repeat occupies 82 to 359 (NVVRKYAKRI…LVLGVLSGEF (278 aa)). Residues 91-114 (ITEWPPFEYMILATIIANCIVLAL) form a helical membrane-spanning segment. The Extracellular portion of the chain corresponds to 115-131 (EQHLPDGDKTPMSERLD). The helical transmembrane segment at 132–152 (DTEPYFIGIFCFEAGIKILAL) threads the bilayer. Topologically, residues 153–163 (GFVLHKGSYLR) are cytoplasmic. The chain crosses the membrane as a helical span at residues 164 to 182 (NGWNVMDFVVVLTGILATA). The Extracellular segment spans residues 183-187 (GTDFD). A helical transmembrane segment spans residues 188–211 (LRTLRAVRVLRPLKLVSGIPSLQV). Over 212 to 221 (VLKSIMKAMV) the chain is Cytoplasmic. The chain crosses the membrane as a helical span at residues 222 to 244 (PLLQIGLLLFFAILMFAIIGLEF). Over 245-331 (YMGKFHKACF…NTNDAAGNTW (87 aa)) the chain is Extracellular. N-linked (GlcNAc...) asparagine glycosylation is present at N256. Residues 332-356 (NWLYFIPLIIIGSFFMLNLVLGVLS) traverse the membrane as a helical segment. Over 357–483 (GEFAKERERV…FFIRRMVKAQ (127 aa)) the chain is Cytoplasmic. A binding to the beta subunit region spans residues 379 to 396 (QQIERELNGYLEWIFKAE). Phosphoserine is present on S411. 452–459 (ASLKSGKT) lines the ATP pocket. An II repeat occupies 469-713 (EKMFRFFIRR…VFLAIAVDNL (245 aa)). A helical membrane pass occupies residues 484–502 (SFYWTVLCVVALNTLCVAM). At 503-512 (VHYNQPQRLT) the chain is on the extracellular side. Residues 513-535 (TALYFAEFVFLGLFLTEMSLKMY) traverse the membrane as a helical segment. Topologically, residues 536–545 (GLGPRSYFRS) are cytoplasmic. S545 provides a ligand contact to a 1,2-diacyl-sn-glycero-3-phospho-(1D-myo-inositol-4,5-bisphosphate). A helical membrane pass occupies residues 546–567 (SFNCFDFGVIVGSIFEVVWAAV). Over 568–574 (KPGTSFG) the chain is Extracellular. Residues 575–587 (ISVLRALRLLRIF) traverse the membrane as a helical segment. The a 1,2-diacyl-sn-glycero-3-phospho-(1D-myo-inositol-4,5-bisphosphate) site is built by R585 and K588. Residues 588-605 (KVTKYWNSLRNLVVSLLN) lie on the Cytoplasmic side of the membrane. A helical transmembrane segment spans residues 606–631 (SMKSIISLLFLLFLFIVVFALLGMQL). The Extracellular segment spans residues 632-683 (FGGQFNFKDETPTTNFDTFPAAILTVFQILTGEDWNAVMYHGIESQGGVSRG). The helical transmembrane segment at 684-710 (MFSSFYFIVLTLFGNYTLLNVFLAIAV) threads the bilayer. Residues 711-1156 (DNLANAQELT…CCHYIVTMRY (446 aa)) are Cytoplasmic-facing. A phosphoserine mark is found at S746, S749, and S784. Basic and acidic residues-rich tracts occupy residues 809 to 827 (DVKT…RDAP), 870 to 891 (EQDR…EERG), 927 to 937 (GSPEEAAEREP), 973 to 984 (CPREAESSEEPA), and 999 to 1026 (TAEK…RNHQ). Disordered stretches follow at residues 809 to 1026 (DVKT…RNHQ) and 1056 to 1084 (VEEQ…TTVH). The segment covering 1066–1083 (QRNVTRMGSQPPDTSTTV) has biased composition (polar residues). S1074 is modified (phosphoserine). The stretch at 1142–1424 (NLLRRCCHYI…IFVALIIITF (283 aa)) is one III repeat. The chain crosses the membrane as a helical span at residues 1157 to 1175 (FEMVILVVIALSSIALAAE). The Extracellular portion of the chain corresponds to 1176–1183 (DPVRTDSP). Residues 1184 to 1208 (RNNALKYMDYIFTGVFTFEMVIKMI) form a helical membrane-spanning segment. Residues 1209-1222 (DLGLLLHPGAYFRD) lie on the Cytoplasmic side of the membrane. The helical transmembrane segment at 1223–1243 (LWNILDFIVVSGALVAFAFSG) threads the bilayer. At 1244–1249 (SKGKDI) the chain is on the extracellular side. A helical membrane pass occupies residues 1250–1270 (STIKSLRVLRVLRPLKTIKRL). The Cytoplasmic segment spans residues 1271 to 1288 (PKLKAVFDCVVNSLKNVL). A helical transmembrane segment spans residues 1289 to 1308 (NILIVYMLFMFIFAVIAVQL). Residues 1309–1395 (FKGKFFYCTD…EQGPSPGYRM (87 aa)) lie on the Extracellular side of the membrane. A helical transmembrane segment spans residues 1396 to 1421 (ELSIFYVVYFVVFPFFFVNIFVALII). Topologically, residues 1422 to 1476 (ITFQEQGDKVMSECSLEKNERACIDFAISARPLTRYMPQNKQSFQYKTWTFVVSP) are cytoplasmic. One copy of the IV repeat lies at 1461 to 1714 (NKQSFQYKTW…LFVAVIMDNF (254 aa)). The helical transmembrane segment at 1477–1495 (PFEYFIMAMIALNTVVLMM) threads the bilayer. At 1496 to 1503 (KFYDAPYE) the chain is on the extracellular side. A helical membrane pass occupies residues 1504-1528 (YELMLKCLNIVFTSMFSMECVLKII). Residues 1529–1538 (AFGVLNYFRD) are Cytoplasmic-facing. A helical transmembrane segment spans residues 1539 to 1560 (AWNVFDFVTVLGSITDILVTEI). At 1561 to 1566 (ANNFIN) the chain is on the extracellular side. N-linked (GlcNAc...) asparagine glycosylation is present at N1566. The chain crosses the membrane as a helical span at residues 1567–1585 (LSFLRLFRAARLIKLLRQG). The Cytoplasmic portion of the chain corresponds to 1586–1604 (YTIRILLWTFVQSFKALPY). A helical transmembrane segment spans residues 1605-1624 (VCLLIAMLFFIYAIIGMQVF). Over 1625-1686 (GNIALDDDTS…SNASECGSDF (62 aa)) the chain is Extracellular. Residue N1678 is glycosylated (N-linked (GlcNAc...) asparagine). A helical transmembrane segment spans residues 1687–1710 (AYFYFVSFIFLCSFLMLNLFVAVI). The Cytoplasmic portion of the chain corresponds to 1711–2339 (MDNFEYLTRD…CHHPDRDRRC (629 aa)). One can recognise an EF-hand domain in the interval 1727 to 1762 (HHLDEFIRVWAEYDPAACGRISYSDMFEMLKHMSPP). Ca(2+) contacts are provided by D1740, R1746, and D1751. The tract at residues 1983-2312 (TLSGPDAEPQ…QPPPLRRVPN (330 aa)) is disordered. Over residues 2050–2064 (PHHHHHRCHRRRDRK) the composition is skewed to basic residues. Phosphoserine is present on S2067. The segment covering 2099–2136 (CRRERERRQERGRSQERRQPSSSSSEKHRFYSCDRFGG) has biased composition (basic and acidic residues). Polar residues-rich tracts occupy residues 2144–2155 (PSLSSHPTSPTA) and 2165–2181 (GSGS…SGAS). 3 positions are modified to phosphoserine: S2224, S2233, and S2256. Residues 2286–2302 (SNSGRSSRTSYVSSLTS) show a composition bias toward low complexity.

It belongs to the calcium channel alpha-1 subunit (TC 1.A.1.11) family. CACNA1B subfamily. In terms of assembly, multisubunit complex consisting of alpha-1, alpha-2, beta and delta subunits in a 1:1:1:1 ratio. The channel activity is directed by the pore-forming and voltage-sensitive alpha-1 subunit. In many cases, this subunit is sufficient to generate voltage-sensitive calcium channel activity. The auxiliary subunits beta and alpha-2/delta linked by a disulfide bridge regulate the channel activity. Interacts with RIMS1. Interacts with FMR1 (via C-terminus); this interaction induces a decrease in the number of presynaptic functional CACNA1B channels at the cell surface. In terms of processing, phosphorylated in vitro by CaM-kinase II, PKA, PKC and CGPK. As to expression, widespread expression throughout the brain. Highest levels in corpus striatum and midbrain.

It localises to the membrane. It carries out the reaction Ca(2+)(in) = Ca(2+)(out). Is specifically blocked by omega-conotoxin GVIA. Is specifically blocked by omega-conotoxin MVIIA (ziconotide). Is insensitive to dihydropyridines (DHP). Voltage-sensitive calcium channels (VSCC) mediate the entry of calcium ions into excitable cells and are also involved in a variety of calcium-dependent processes, including muscle contraction, hormone or neurotransmitter release, gene expression, cell motility, cell division and cell death. This alpha-1B subunit gives rise to N-type calcium currents. N-type calcium channels belong to the 'high-voltage activated' (HVA) group. They are involved in pain signaling. Calcium channels containing alpha-1B subunit may play a role in directed migration of immature neurons. Mediates Ca(2+) release probability at hippocampal neuronal soma and synaptic terminals. In Oryctolagus cuniculus (Rabbit), this protein is Voltage-dependent N-type calcium channel subunit alpha-1B (CACNA1B).